The chain runs to 395 residues: Protein NDRG1 (395 aa).

Positions 325-395 (RSRTGSAASS…NTPKSMEISC (71 aa)) are disordered. The segment covering 326–339 (SRTGSAASSSSQDG) has biased composition (low complexity). 4 repeat units span residues 339–348 (GNRSRSHTNE), 349–358 (GSRSRSHTGD), 359–368 (GNRSRAHTGD), and 369–378 (GNRSRSHTDS). The interval 339–378 (GNRSRSHTNEGSRSRSHTGDGNRSRAHTGDGNRSRSHTDS) is 4 X 10 AA tandem repeats of G-[NS]-R-S-R-[AS]-H-T-[DGN]-[DES]. The segment covering 345–376 (HTNEGSRSRSHTGDGNRSRAHTGDGNRSRSHT) has biased composition (basic and acidic residues). The segment covering 377–389 (DSNNTNSEHNTPK) has biased composition (polar residues).

It belongs to the NDRG family.

Functionally, may be involved in pronephros development, after specification of the pronephros. The polypeptide is Protein NDRG1 (Xenopus tropicalis (Western clawed frog)).